A 910-amino-acid polypeptide reads, in one-letter code: NADH-quinone oxidoreductase subunit G (910 aa).

The 83-residue stretch at methionine 1–threonine 83 folds into the 2Fe-2S ferredoxin-type domain. Residues cysteine 34, cysteine 45, cysteine 48, and cysteine 67 each contribute to the [2Fe-2S] cluster site. The 40-residue stretch at threonine 83–threonine 122 folds into the 4Fe-4S His(Cys)3-ligated-type domain. Residues histidine 99, cysteine 103, cysteine 106, cysteine 112, cysteine 151, cysteine 154, cysteine 157, cysteine 201, cysteine 228, cysteine 231, cysteine 235, and cysteine 263 each contribute to the [4Fe-4S] cluster site. The 4Fe-4S Mo/W bis-MGD-type domain maps to methionine 221–asparagine 277.

It belongs to the complex I 75 kDa subunit family. In terms of assembly, composed of 13 different subunits. Subunits NuoCD, E, F, and G constitute the peripheral sector of the complex. It depends on [2Fe-2S] cluster as a cofactor. [4Fe-4S] cluster serves as cofactor.

It catalyses the reaction a quinone + NADH + 5 H(+)(in) = a quinol + NAD(+) + 4 H(+)(out). Its function is as follows. NDH-1 shuttles electrons from NADH, via FMN and iron-sulfur (Fe-S) centers, to quinones in the respiratory chain. Couples the redox reaction to proton translocation (for every two electrons transferred, four hydrogen ions are translocated across the cytoplasmic membrane), and thus conserves the redox energy in a proton gradient. The polypeptide is NADH-quinone oxidoreductase subunit G (nuoG) (Buchnera aphidicola subsp. Schizaphis graminum (strain Sg)).